The sequence spans 302 residues: Myb-related protein Hv33 (302 aa).

2 HTH myb-type domains span residues 11 to 63 (QPKV…INYL) and 64 to 118 (RPDL…KKKL). DNA-binding regions (H-T-H motif) lie at residues 39–63 (WSSV…INYL) and 91–114 (WSQI…NSCI). Positions 137-158 (ATAAAALPDAEEEDRKPLCPAV) are disordered.

As to expression, germinating seed and apical meristem of shoot and root.

Its subcellular location is the nucleus. Functionally, possible transcription activator in response to an external signal. May be involved in the regulation of flavonoid biosynthesis. This Hordeum vulgare (Barley) protein is Myb-related protein Hv33 (MYB2).